A 373-amino-acid polypeptide reads, in one-letter code: tRNA-specific 2-thiouridylase MnmA (373 aa).

Residues 18 to 25 (AMSGGVDS) and L44 contribute to the ATP site. The Nucleophile role is filled by C117. C117 and C214 are disulfide-bonded. G141 provides a ligand contact to ATP. Positions 163 to 165 (RDQ) are interaction with tRNA. The Cysteine persulfide intermediate role is filled by C214.

This sequence belongs to the MnmA/TRMU family.

The protein resides in the cytoplasm. The catalysed reaction is S-sulfanyl-L-cysteinyl-[protein] + uridine(34) in tRNA + AH2 + ATP = 2-thiouridine(34) in tRNA + L-cysteinyl-[protein] + A + AMP + diphosphate + H(+). Its function is as follows. Catalyzes the 2-thiolation of uridine at the wobble position (U34) of tRNA, leading to the formation of s(2)U34. This is tRNA-specific 2-thiouridylase MnmA from Paramagnetospirillum magneticum (strain ATCC 700264 / AMB-1) (Magnetospirillum magneticum).